Here is a 266-residue protein sequence, read N- to C-terminus: 4-hydroxy-tetrahydrodipicolinate reductase (266 aa).

Residues 8–13 (GAAGRM) and Glu33 each bind NAD(+). Residue Arg34 coordinates NADP(+). NAD(+)-binding positions include 97–99 (GST) and 121–124 (APNM). Residue His154 is the Proton donor/acceptor of the active site. A (S)-2,3,4,5-tetrahydrodipicolinate-binding site is contributed by His155. Lys158 functions as the Proton donor in the catalytic mechanism. 164–165 (GT) provides a ligand contact to (S)-2,3,4,5-tetrahydrodipicolinate.

Belongs to the DapB family.

Its subcellular location is the cytoplasm. The enzyme catalyses (S)-2,3,4,5-tetrahydrodipicolinate + NAD(+) + H2O = (2S,4S)-4-hydroxy-2,3,4,5-tetrahydrodipicolinate + NADH + H(+). It carries out the reaction (S)-2,3,4,5-tetrahydrodipicolinate + NADP(+) + H2O = (2S,4S)-4-hydroxy-2,3,4,5-tetrahydrodipicolinate + NADPH + H(+). Its pathway is amino-acid biosynthesis; L-lysine biosynthesis via DAP pathway; (S)-tetrahydrodipicolinate from L-aspartate: step 4/4. Functionally, catalyzes the conversion of 4-hydroxy-tetrahydrodipicolinate (HTPA) to tetrahydrodipicolinate. The protein is 4-hydroxy-tetrahydrodipicolinate reductase of Geobacter metallireducens (strain ATCC 53774 / DSM 7210 / GS-15).